Consider the following 374-residue polypeptide: Arf-GAP with dual PH domain-containing protein 1 (374 aa).

Residues 7 to 126 enclose the Arf-GAP domain; the sequence is RAVLELLQRP…EFIYPEKQEP (120 aa). A C4-type zinc finger spans residues 21-44; that stretch reads CADCGAPDPDWASYTLGVFICLSC. Residue S87 is modified to Phosphoserine; by PKC. 2 consecutive PH domains span residues 129-230 and 252-356; these read AGYR…AARF and NYLK…KAVD. An N6-acetyllysine modification is found at K272. A Phosphothreonine; by PKC modification is found at T276.

As to quaternary structure, interacts with PRKCA, PRKCI and PRKCZ. Interacts with the N-terminal region of PRKD1. In terms of processing, phosphorylated by PRKCA, PRKCI, PRKCZ and PRKD1 in vitro. As to expression, expressed at highest levels in brain and at lower levels in peripheral blood leukocytes.

Its subcellular location is the nucleus. It is found in the cytoplasm. GTPase-activating protein for the ADP ribosylation factor family. Binds phosphatidylinositol 3,4,5-trisphosphate (PtdInsP3) and inositol 1,3,4,5-tetrakisphosphate (InsP4). Regulates the incorporation of CD63 and CD9 into multivesicular bodies. The sequence is that of Arf-GAP with dual PH domain-containing protein 1 (ADAP1) from Homo sapiens (Human).